Reading from the N-terminus, the 296-residue chain is dTDP-rhamnosyl transferase RfbF (296 aa).

Belongs to the glycosyltransferase 2 family.

It functions in the pathway bacterial outer membrane biogenesis; lipopolysaccharide biosynthesis. The polypeptide is dTDP-rhamnosyl transferase RfbF (rfbF) (Shigella flexneri).